Consider the following 262-residue polypeptide: MLTYPAIDPVAVSFGPLKVHWYGLMYVIGIAATWILARRRVQRSANPLFTPAQVEDLVFYAAIGVVVGGRLGYALFYNFSGFLHDPAMLFRIWEGGMAFHGGLIGVLIAMYAYGRSQGIRFFDVADFLAPYVPIGLLAGRIGNFINGELWGKPSDLPWAMIFPHAGDVPRHPSQLYEAFLEGLVLLIILQWFSRRSPPRMAVSGLFLLGYGVFRFAVEFVRLPDVQLGYLAFGWLTMGQILCLPMILFGIVLLAAAYARRSA.

3 consecutive transmembrane segments (helical) span residues 17-37 (LKVHWYGLMYVIGIAATWILA), 57-77 (LVFYAAIGVVVGGRLGYALFY), and 92-112 (IWEGGMAFHGGLIGVLIAMYA). Arginine 140 is a binding site for a 1,2-diacyl-sn-glycero-3-phospho-(1'-sn-glycerol). 2 consecutive transmembrane segments (helical) span residues 200–220 (MAVSGLFLLGYGVFRFAVEFV) and 234–254 (WLTMGQILCLPMILFGIVLLA).

Belongs to the Lgt family.

The protein localises to the cell inner membrane. The enzyme catalyses L-cysteinyl-[prolipoprotein] + a 1,2-diacyl-sn-glycero-3-phospho-(1'-sn-glycerol) = an S-1,2-diacyl-sn-glyceryl-L-cysteinyl-[prolipoprotein] + sn-glycerol 1-phosphate + H(+). The protein operates within protein modification; lipoprotein biosynthesis (diacylglyceryl transfer). Catalyzes the transfer of the diacylglyceryl group from phosphatidylglycerol to the sulfhydryl group of the N-terminal cysteine of a prolipoprotein, the first step in the formation of mature lipoproteins. In Methylococcus capsulatus (strain ATCC 33009 / NCIMB 11132 / Bath), this protein is Phosphatidylglycerol--prolipoprotein diacylglyceryl transferase.